The primary structure comprises 57 residues: Small ribosomal subunit protein bS21 (57 aa).

This sequence belongs to the bacterial ribosomal protein bS21 family.

The polypeptide is Small ribosomal subunit protein bS21 (Bacillus anthracis (strain A0248)).